The chain runs to 783 residues: Lon protease (783 aa).

A Lon N-terminal domain is found at 16 to 210; the sequence is LPLLASRGVV…KLLEIIKDEI (195 aa). 361 to 368 is a binding site for ATP; the sequence is GAPGVGKT. The Lon proteolytic domain occupies 597–778; the sequence is KDRVGVATGM…DQVLDLILGG (182 aa). Residues S684 and K727 contribute to the active site.

The protein belongs to the peptidase S16 family. In terms of assembly, homohexamer. Organized in a ring with a central cavity.

The protein resides in the cytoplasm. The catalysed reaction is Hydrolysis of proteins in presence of ATP.. In terms of biological role, ATP-dependent serine protease that mediates the selective degradation of mutant and abnormal proteins as well as certain short-lived regulatory proteins. Required for cellular homeostasis and for survival from DNA damage and developmental changes induced by stress. Degrades polypeptides processively to yield small peptide fragments that are 5 to 10 amino acids long. Binds to DNA in a double-stranded, site-specific manner. In Halothermothrix orenii (strain H 168 / OCM 544 / DSM 9562), this protein is Lon protease.